Reading from the N-terminus, the 87-residue chain is U3-theraphotoxin-Hhn1a 17 (87 aa).

A signal peptide spans 1–24 (MVNVKASMFLTFAGLVLLFVVCYA). A propeptide spanning residues 25-52 (SESEEKEFPKEMLSSIFAVDNDFKQEER) is cleaved from the precursor. Disulfide bonds link C54–C67, C61–C72, and C66–C79.

Belongs to the neurotoxin 10 (Hwtx-1) family. 51 (Hntx-8) subfamily. Hntx-8 sub-subfamily. In terms of tissue distribution, expressed by the venom gland.

It localises to the secreted. Ion channel inhibitor. The chain is U3-theraphotoxin-Hhn1a 17 from Cyriopagopus hainanus (Chinese bird spider).